A 208-amino-acid chain; its full sequence is Ribonuclease HII (208 aa).

The RNase H type-2 domain occupies 11-203 (GPVAGVDEAG…VAAAHEQWLK (193 aa)). Positions 17, 18, and 112 each coordinate a divalent metal cation.

This sequence belongs to the RNase HII family. It depends on Mn(2+) as a cofactor. Mg(2+) serves as cofactor.

Its subcellular location is the cytoplasm. It catalyses the reaction Endonucleolytic cleavage to 5'-phosphomonoester.. In terms of biological role, endonuclease that specifically degrades the RNA of RNA-DNA hybrids. In Corynebacterium jeikeium (strain K411), this protein is Ribonuclease HII.